We begin with the raw amino-acid sequence, 76 residues long: Attractin (76 aa).

Positions 1–18 (MKVAIIILSLALVAAVFA) are cleaved as a signal peptide. Cystine bridges form between C22–C59, C31–C51, and C38–C44. A glycan (N-linked (GlcNAc...) asparagine) is linked at N26.

Binds to temptin and enticin. In terms of tissue distribution, produced by the albumen gland of the egg cordons.

It localises to the secreted. In terms of biological role, water-borne pheromone that attract the marine mollusk Aplysia into breeding aggregations and coordinate male and female reproductive behavior within the aggregation. The polypeptide is Attractin (ATT) (Aplysia californica (California sea hare)).